Here is a 324-residue protein sequence, read N- to C-terminus: MKRVNVFRSGVFSRLFALLLPFLLGINGLVYASAEAPAEAVHAEAAAHAEGGHESAGDVIMHHILDTGVMSFEPFGEVHLPQIVIGGFDISITRHVVMMWIASAILLVVFLLVGNRYKTMTSRQAPGGMANAMEALVEFIRLDVAKSNIGAGYEKHLPYLLTVFAFILLLNLLGLVPYGATATGNINVTLTLAVFTFFITQVASLKAHGIKGYLAHLTAGTHWALWIIMIPIEIIGLFTKPFALTVRLFANMTAGHIVILSLIFISFILKSYIVAMFVSVPFSIFIYLLEIFVAFLQAFIFTMLSALFIGLATAHEGHEGEAAH.

The first 33 residues, 1–33 (MKRVNVFRSGVFSRLFALLLPFLLGINGLVYAS), serve as a signal peptide directing secretion. 6 consecutive transmembrane segments (helical) span residues 95-115 (HVVMMWIASAILLVVFLLVGN), 157-177 (LPYLLTVFAFILLLNLLGLVP), 179-199 (GATATGNINVTLTLAVFTFFI), 224-244 (ALWIIMIPIEIIGLFTKPFAL), 257-277 (IVILSLIFISFILKSYIVAMF), and 291-311 (IFVAFLQAFIFTMLSALFIGL).

It belongs to the ATPase A chain family. As to quaternary structure, F-type ATPases have 2 components, CF(1) - the catalytic core - and CF(0) - the membrane proton channel. CF(1) has five subunits: alpha(3), beta(3), gamma(1), delta(1), epsilon(1). CF(0) has four main subunits: a, b, b' and c.

It is found in the cell inner membrane. Its function is as follows. Key component of the proton channel; it plays a direct role in the translocation of protons across the membrane. In Prosthecochloris aestuarii (strain DSM 271 / SK 413), this protein is ATP synthase subunit a 2.